Consider the following 313-residue polypeptide: D-alanine--D-alanine ligase (313 aa).

The 197-residue stretch at 107 to 303 folds into the ATP-grasp domain; sequence KQAFAAAGLT…FEALVEQIAC (197 aa). 135–188 lines the ATP pocket; the sequence is PFGLPVVVKPVQEGSSVGVTIVKKPEDLQAALDEAFRYDTLVLVEKYIKGQEVQ. Residues Asp-256, Glu-269, and Asn-271 each contribute to the Mg(2+) site.

This sequence belongs to the D-alanine--D-alanine ligase family. Mg(2+) is required as a cofactor. Requires Mn(2+) as cofactor.

The protein localises to the cytoplasm. It carries out the reaction 2 D-alanine + ATP = D-alanyl-D-alanine + ADP + phosphate + H(+). It functions in the pathway cell wall biogenesis; peptidoglycan biosynthesis. Cell wall formation. In Trichlorobacter lovleyi (strain ATCC BAA-1151 / DSM 17278 / SZ) (Geobacter lovleyi), this protein is D-alanine--D-alanine ligase.